A 109-amino-acid chain; its full sequence is Small ribosomal subunit protein bS6 (109 aa).

The protein belongs to the bacterial ribosomal protein bS6 family.

In terms of biological role, binds together with bS18 to 16S ribosomal RNA. This Anaplasma marginale (strain St. Maries) protein is Small ribosomal subunit protein bS6.